Reading from the N-terminus, the 1399-residue chain is DNA-directed RNA polymerase subunit beta' (1399 aa).

Zn(2+)-binding residues include Cys70, Cys72, Cys85, and Cys88. The Mg(2+) site is built by Asp460, Asp462, and Asp464. The Zn(2+) site is built by Cys814, Cys888, Cys895, and Cys898.

Belongs to the RNA polymerase beta' chain family. The RNAP catalytic core consists of 2 alpha, 1 beta, 1 beta' and 1 omega subunit. When a sigma factor is associated with the core the holoenzyme is formed, which can initiate transcription. It depends on Mg(2+) as a cofactor. The cofactor is Zn(2+).

The enzyme catalyses RNA(n) + a ribonucleoside 5'-triphosphate = RNA(n+1) + diphosphate. DNA-dependent RNA polymerase catalyzes the transcription of DNA into RNA using the four ribonucleoside triphosphates as substrates. This Ectopseudomonas mendocina (strain ymp) (Pseudomonas mendocina) protein is DNA-directed RNA polymerase subunit beta'.